The following is a 225-amino-acid chain: ATP-dependent Clp protease proteolytic subunit (225 aa).

The active-site Nucleophile is the Ser101. The active site involves His126.

It belongs to the peptidase S14 family. In terms of assembly, component of the chloroplastic Clp protease core complex.

Its subcellular location is the plastid. The protein localises to the chloroplast stroma. It catalyses the reaction Hydrolysis of proteins to small peptides in the presence of ATP and magnesium. alpha-casein is the usual test substrate. In the absence of ATP, only oligopeptides shorter than five residues are hydrolyzed (such as succinyl-Leu-Tyr-|-NHMec, and Leu-Tyr-Leu-|-Tyr-Trp, in which cleavage of the -Tyr-|-Leu- and -Tyr-|-Trp bonds also occurs).. Its function is as follows. Cleaves peptides in various proteins in a process that requires ATP hydrolysis. Has a chymotrypsin-like activity. Plays a major role in the degradation of misfolded proteins. The sequence is that of ATP-dependent Clp protease proteolytic subunit from Chlorokybus atmophyticus (Soil alga).